A 364-amino-acid chain; its full sequence is MRCVHFGECGSCTLALPYEDQLNFKANFIADKFREFFDGELEIFSSKPQRYRSRAEFGIWHENDEIYYTMHGSRSKFIKISECLKVDESIAALMPRLLEELGTSNELKSKIFGVEFISTSELCAVILLYHKRLEGLEAAFSELAKRLGVKIVARSRGQKISSDERELCDSFEINGLRYALNFGDSAFIQPNKCVNEKMISWAMNAVQNAEDMLEMYCGHGNFTIPLAGKFRRVLATEISKSSIANALKNCERNGIGNIKFLRMSAEELMSAFSGERGFRRLEGVNLADFTFSHVLVDPPRAGLEASVINFIKNYENIVYISCNPQTLYENLKELSLTHKATKFAMFDQFANTNHIECGVVLKKR.

Gln189, Tyr216, Asn221, Glu237, and Asp297 together coordinate S-adenosyl-L-methionine. Cys322 (nucleophile) is an active-site residue. Glu356 functions as the Proton acceptor in the catalytic mechanism.

It belongs to the class I-like SAM-binding methyltransferase superfamily. RNA M5U methyltransferase family. TrmA subfamily.

It catalyses the reaction uridine(54) in tRNA + S-adenosyl-L-methionine = 5-methyluridine(54) in tRNA + S-adenosyl-L-homocysteine + H(+). The catalysed reaction is uridine(341) in tmRNA + S-adenosyl-L-methionine = 5-methyluridine(341) in tmRNA + S-adenosyl-L-homocysteine + H(+). Functionally, dual-specificity methyltransferase that catalyzes the formation of 5-methyluridine at position 54 (m5U54) in all tRNAs, and that of position 341 (m5U341) in tmRNA (transfer-mRNA). This is tRNA/tmRNA (uracil-C(5))-methyltransferase from Campylobacter curvus (strain 525.92).